Reading from the N-terminus, the 420-residue chain is WD repeat-containing protein 21 (420 aa).

The DDB-boX signature appears at 73–75; it reads RQF. WD repeat units lie at residues 251–289, 293–332, and 341–383; these read QSKG…ECVQ, HGSS…SKKR, and GHSN…PFKE.

It is found in the cytoplasm. The protein resides in the nucleus. In Schizosaccharomyces pombe (strain 972 / ATCC 24843) (Fission yeast), this protein is WD repeat-containing protein 21 (wdr21).